A 105-amino-acid chain; its full sequence is UPF0060 membrane protein Ajs_1326 (105 aa).

The next 4 helical transmembrane spans lie at 4 to 24, 30 to 50, 60 to 80, and 82 to 102; these read FALFIATALAEIVGCYLPYLW, SAWLLVPAAASLALFAWLLTL, AAYGGVYIGVALLWLWIVDGI, and PTAWDVAGVAVALTGMGLIMF.

It belongs to the UPF0060 family.

It is found in the cell inner membrane. This chain is UPF0060 membrane protein Ajs_1326, found in Acidovorax sp. (strain JS42).